A 146-amino-acid polypeptide reads, in one-letter code: Snaclec jerdonibitin subunit beta (146 aa).

The first 23 residues, 1–23 (MGRFIFVSFGLLVVFLSLSGTGA), serve as a signal peptide directing secretion. 3 disulfides stabilise this stretch: C25/C36, C53/C142, and C119/C134. One can recognise a C-type lectin domain in the interval 32–143 (YEGHCYRVFQ…CSKTYPFVCK (112 aa)).

Belongs to the snaclec family. As to quaternary structure, heterodimer of subunits alpha and beta; disulfide-linked. As to expression, expressed by the venom gland.

Its subcellular location is the secreted. In terms of biological role, snaclec that dose-dependently inhibits platelet aggregation induced by ristocetin or low-dose thrombin, but not by high-dose thrombin. Binds to GPIbalpha (GP1BA). In vivo, also dose-dependently induces thrombocytopenia of mice and platelet counts remains at very low level even after 18 hours intravenous injection. This is Snaclec jerdonibitin subunit beta from Protobothrops jerdonii (Jerdon's pitviper).